We begin with the raw amino-acid sequence, 305 residues long: HTH-type transcriptional activator BauR (305 aa).

The HTH lysR-type domain maps to 15–72 (FDIRLLRIFKTIVECGSFSAAESTLGLSRSAISLHMGDLEKRLGMRLCQRGRAGFALT).

It belongs to the LysR transcriptional regulatory family.

Its function is as follows. Involved in the degradation of beta-alanine. BauR activates the transcription of the bauABCD operon. This chain is HTH-type transcriptional activator BauR (bauR), found in Pseudomonas aeruginosa (strain ATCC 15692 / DSM 22644 / CIP 104116 / JCM 14847 / LMG 12228 / 1C / PRS 101 / PAO1).